The following is a 265-amino-acid chain: Putative pyruvate, phosphate dikinase regulatory protein 2 (265 aa).

Position 150 to 157 (150 to 157 (GVSRTSKT)) interacts with ADP.

Belongs to the pyruvate, phosphate/water dikinase regulatory protein family. PDRP subfamily.

The catalysed reaction is N(tele)-phospho-L-histidyl/L-threonyl-[pyruvate, phosphate dikinase] + ADP = N(tele)-phospho-L-histidyl/O-phospho-L-threonyl-[pyruvate, phosphate dikinase] + AMP + H(+). It catalyses the reaction N(tele)-phospho-L-histidyl/O-phospho-L-threonyl-[pyruvate, phosphate dikinase] + phosphate + H(+) = N(tele)-phospho-L-histidyl/L-threonyl-[pyruvate, phosphate dikinase] + diphosphate. Its function is as follows. Bifunctional serine/threonine kinase and phosphorylase involved in the regulation of the pyruvate, phosphate dikinase (PPDK) by catalyzing its phosphorylation/dephosphorylation. The sequence is that of Putative pyruvate, phosphate dikinase regulatory protein 2 from Latilactobacillus sakei subsp. sakei (strain 23K) (Lactobacillus sakei subsp. sakei).